The sequence spans 292 residues: NAD kinase (292 aa).

Residue Asp-72 is the Proton acceptor of the active site. NAD(+) is bound by residues 72 to 73 (DG), 146 to 147 (NE), His-157, Arg-174, Asp-176, and 187 to 192 (TAYSLS).

It belongs to the NAD kinase family. It depends on a divalent metal cation as a cofactor.

Its subcellular location is the cytoplasm. It carries out the reaction NAD(+) + ATP = ADP + NADP(+) + H(+). In terms of biological role, involved in the regulation of the intracellular balance of NAD and NADP, and is a key enzyme in the biosynthesis of NADP. Catalyzes specifically the phosphorylation on 2'-hydroxyl of the adenosine moiety of NAD to yield NADP. The chain is NAD kinase from Shewanella woodyi (strain ATCC 51908 / MS32).